Here is a 461-residue protein sequence, read N- to C-terminus: Toxin CfTX-B (461 aa).

A signal peptide spans Met-1 to Gly-24. Positions Ile-25–Arg-31 are excised as a propeptide.

The protein belongs to the jellyfish toxin family. Type II subfamily. In terms of assembly, oligomer. In terms of processing, contains 2 disulfide bonds. As to expression, nematocytes.

It localises to the secreted. It is found in the nematocyst. The protein resides in the target cell membrane. Functionally, the fraction containing this toxin and CfTX-B shows potent hemolytic activity. This fraction causes minor effects on the cardiovascular system of anesthetized rats (at 25 ug/kg), since it has no significant effects on heart rate but produces relatively small increases in mean arterial pressure. In Chironex fleckeri (Australian box jellyfish), this protein is Toxin CfTX-B.